Reading from the N-terminus, the 542-residue chain is Membrane protein insertase YidC (542 aa).

6 consecutive transmembrane segments (helical) span residues 6-26 (NILL…WQTD), 326-346 (LVVD…LLMF), 350-370 (FVGN…GMLY), 421-441 (GGCL…WVLL), 458-478 (LSVQ…MFLM), and 501-521 (VIFT…WLVG).

This sequence belongs to the OXA1/ALB3/YidC family. Type 1 subfamily. Interacts with the Sec translocase complex via SecD. Specifically interacts with transmembrane segments of nascent integral membrane proteins during membrane integration.

The protein resides in the cell inner membrane. Its function is as follows. Required for the insertion and/or proper folding and/or complex formation of integral membrane proteins into the membrane. Involved in integration of membrane proteins that insert both dependently and independently of the Sec translocase complex, as well as at least some lipoproteins. Aids folding of multispanning membrane proteins. This is Membrane protein insertase YidC from Shewanella loihica (strain ATCC BAA-1088 / PV-4).